The primary structure comprises 372 residues: Queuine tRNA-ribosyltransferase (372 aa).

Catalysis depends on aspartate 89, which acts as the Proton acceptor. Residues 89 to 93 (DSGGF), aspartate 143, glutamine 185, and glycine 212 contribute to the substrate site. The interval 243 to 249 (GVGKPED) is RNA binding. Aspartate 262 serves as the catalytic Nucleophile. Residues 267 to 271 (TRNAR) form an RNA binding; important for wobble base 34 recognition region. The Zn(2+) site is built by cysteine 300, cysteine 302, cysteine 305, and histidine 331.

Belongs to the queuine tRNA-ribosyltransferase family. As to quaternary structure, homodimer. Within each dimer, one monomer is responsible for RNA recognition and catalysis, while the other monomer binds to the replacement base PreQ1. It depends on Zn(2+) as a cofactor.

The enzyme catalyses 7-aminomethyl-7-carbaguanine + guanosine(34) in tRNA = 7-aminomethyl-7-carbaguanosine(34) in tRNA + guanine. It participates in tRNA modification; tRNA-queuosine biosynthesis. Catalyzes the base-exchange of a guanine (G) residue with the queuine precursor 7-aminomethyl-7-deazaguanine (PreQ1) at position 34 (anticodon wobble position) in tRNAs with GU(N) anticodons (tRNA-Asp, -Asn, -His and -Tyr). Catalysis occurs through a double-displacement mechanism. The nucleophile active site attacks the C1' of nucleotide 34 to detach the guanine base from the RNA, forming a covalent enzyme-RNA intermediate. The proton acceptor active site deprotonates the incoming PreQ1, allowing a nucleophilic attack on the C1' of the ribose to form the product. After dissociation, two additional enzymatic reactions on the tRNA convert PreQ1 to queuine (Q), resulting in the hypermodified nucleoside queuosine (7-(((4,5-cis-dihydroxy-2-cyclopenten-1-yl)amino)methyl)-7-deazaguanosine). The polypeptide is Queuine tRNA-ribosyltransferase (Pseudomonas aeruginosa (strain LESB58)).